A 157-amino-acid chain; its full sequence is Transcriptional repressor NrdR (157 aa).

The segment at 3–34 (CPHCHQNSSRVIDSRPTDEGRVIRRRRECENC) is a zinc-finger region. The ATP-cone domain occupies 49–139 (LLVIKKNGTR…VYRQFKDMNV (91 aa)).

The protein belongs to the NrdR family. It depends on Zn(2+) as a cofactor.

In terms of biological role, negatively regulates transcription of bacterial ribonucleotide reductase nrd genes and operons by binding to NrdR-boxes. The protein is Transcriptional repressor NrdR of Latilactobacillus sakei subsp. sakei (strain 23K) (Lactobacillus sakei subsp. sakei).